The chain runs to 42 residues: Cytochrome b559 subunit beta (42 aa).

Residues 17–33 (WLAIHGLAVPTVFFLGA) traverse the membrane as a helical segment. Histidine 21 provides a ligand contact to heme.

Belongs to the PsbE/PsbF family. As to quaternary structure, heterodimer of an alpha subunit and a beta subunit. PSII is composed of 1 copy each of membrane proteins PsbA, PsbB, PsbC, PsbD, PsbE, PsbF, PsbH, PsbI, PsbJ, PsbK, PsbL, PsbM, PsbT, PsbX, PsbY, PsbZ, Psb30/Ycf12, at least 3 peripheral proteins of the oxygen-evolving complex and a large number of cofactors. It forms dimeric complexes. The cofactor is heme b.

The protein localises to the plastid. Its subcellular location is the chloroplast thylakoid membrane. Its function is as follows. This b-type cytochrome is tightly associated with the reaction center of photosystem II (PSII). PSII is a light-driven water:plastoquinone oxidoreductase that uses light energy to abstract electrons from H(2)O, generating O(2) and a proton gradient subsequently used for ATP formation. It consists of a core antenna complex that captures photons, and an electron transfer chain that converts photonic excitation into a charge separation. This chain is Cytochrome b559 subunit beta, found in Guillardia theta (Cryptophyte).